A 419-amino-acid polypeptide reads, in one-letter code: Gamma-glutamyl phosphate reductase (419 aa).

Belongs to the gamma-glutamyl phosphate reductase family.

The protein localises to the cytoplasm. The catalysed reaction is L-glutamate 5-semialdehyde + phosphate + NADP(+) = L-glutamyl 5-phosphate + NADPH + H(+). The protein operates within amino-acid biosynthesis; L-proline biosynthesis; L-glutamate 5-semialdehyde from L-glutamate: step 2/2. Functionally, catalyzes the NADPH-dependent reduction of L-glutamate 5-phosphate into L-glutamate 5-semialdehyde and phosphate. The product spontaneously undergoes cyclization to form 1-pyrroline-5-carboxylate. This chain is Gamma-glutamyl phosphate reductase, found in Caldicellulosiruptor saccharolyticus (strain ATCC 43494 / DSM 8903 / Tp8T 6331).